The following is a 179-amino-acid chain: Large ribosomal subunit protein uL6 (179 aa).

Belongs to the universal ribosomal protein uL6 family. In terms of assembly, part of the 50S ribosomal subunit.

Functionally, this protein binds to the 23S rRNA, and is important in its secondary structure. It is located near the subunit interface in the base of the L7/L12 stalk, and near the tRNA binding site of the peptidyltransferase center. In Legionella pneumophila (strain Paris), this protein is Large ribosomal subunit protein uL6.